A 391-amino-acid chain; its full sequence is Probable tRNA sulfurtransferase (391 aa).

Positions 60–167 (DETVAALQRV…NKAYVYSNTL (108 aa)) constitute a THUMP domain. ATP-binding positions include 184 to 185 (LL), 209 to 210 (YF), arginine 266, glycine 288, and glutamine 297.

The protein belongs to the ThiI family.

It is found in the cytoplasm. The enzyme catalyses [ThiI sulfur-carrier protein]-S-sulfanyl-L-cysteine + a uridine in tRNA + 2 reduced [2Fe-2S]-[ferredoxin] + ATP + H(+) = [ThiI sulfur-carrier protein]-L-cysteine + a 4-thiouridine in tRNA + 2 oxidized [2Fe-2S]-[ferredoxin] + AMP + diphosphate. The catalysed reaction is [ThiS sulfur-carrier protein]-C-terminal Gly-Gly-AMP + S-sulfanyl-L-cysteinyl-[cysteine desulfurase] + AH2 = [ThiS sulfur-carrier protein]-C-terminal-Gly-aminoethanethioate + L-cysteinyl-[cysteine desulfurase] + A + AMP + 2 H(+). It functions in the pathway cofactor biosynthesis; thiamine diphosphate biosynthesis. In terms of biological role, catalyzes the ATP-dependent transfer of a sulfur to tRNA to produce 4-thiouridine in position 8 of tRNAs, which functions as a near-UV photosensor. Also catalyzes the transfer of sulfur to the sulfur carrier protein ThiS, forming ThiS-thiocarboxylate. This is a step in the synthesis of thiazole, in the thiamine biosynthesis pathway. The sulfur is donated as persulfide by IscS. In Lachnoclostridium phytofermentans (strain ATCC 700394 / DSM 18823 / ISDg) (Clostridium phytofermentans), this protein is Probable tRNA sulfurtransferase.